The primary structure comprises 236 residues: tRNA (guanine-N(1)-)-methyltransferase (236 aa).

Residues Gly114 and 134–139 (IGDYIL) each bind S-adenosyl-L-methionine.

This sequence belongs to the RNA methyltransferase TrmD family. As to quaternary structure, homodimer.

The protein resides in the cytoplasm. The catalysed reaction is guanosine(37) in tRNA + S-adenosyl-L-methionine = N(1)-methylguanosine(37) in tRNA + S-adenosyl-L-homocysteine + H(+). Its function is as follows. Specifically methylates guanosine-37 in various tRNAs. This chain is tRNA (guanine-N(1)-)-methyltransferase, found in Wolbachia pipientis wMel.